The following is a 176-amino-acid chain: dCTP deaminase (176 aa).

DCTP contacts are provided by residues 102-107 (RSTFAR) and Asp-118. Glu-128 serves as the catalytic Proton donor/acceptor. Tyr-160 and Gln-167 together coordinate dCTP.

This sequence belongs to the dCTP deaminase family. In terms of assembly, homotrimer.

It catalyses the reaction dCTP + H2O + H(+) = dUTP + NH4(+). It participates in pyrimidine metabolism; dUMP biosynthesis; dUMP from dCTP (dUTP route): step 1/2. Catalyzes the deamination of dCTP to dUTP. The sequence is that of dCTP deaminase from Hyperthermus butylicus (strain DSM 5456 / JCM 9403 / PLM1-5).